A 743-amino-acid polypeptide reads, in one-letter code: Inhibitor of nuclear factor kappa-B kinase subunit alpha (743 aa).

Residues 15-300 (WDMKDRLGTG…MDCGRPQCFV (286 aa)) form the Protein kinase domain. Residues 21–29 (LGTGGFGNV) and Lys44 contribute to the ATP site. Residue Asp144 is the Proton acceptor of the active site. The segment at 453–474 (LLRFNTNLTKMKNTMVSASQQL) is leucine-zipper. Positions 736 to 741 (LDFSWL) are NEMO-binding.

Belongs to the protein kinase superfamily. Ser/Thr protein kinase family. I-kappa-B kinase subfamily.

It localises to the cytoplasm. The protein resides in the nucleus. It carries out the reaction L-seryl-[I-kappa-B protein] + ATP = O-phospho-L-seryl-[I-kappa-B protein] + ADP + H(+). Its activity is regulated as follows. Activated when phosphorylated and inactivated when dephosphorylated. Functionally, phosphorylates inhibitors of NF-kappa-B thus leading to the dissociation of the inhibitor/NF-kappa-B complex and ultimately the degradation of the inhibitor. Phosphorylates 'Ser-10' of histone H3 at NF-kappa-B-regulated promoters during inflammatory responses triggered by cytokines. The chain is Inhibitor of nuclear factor kappa-B kinase subunit alpha (chuk) from Xenopus tropicalis (Western clawed frog).